Here is a 1100-residue protein sequence, read N- to C-terminus: Guanylate cyclase 2G (1100 aa).

Residues 1-43 (MASRTRSESPLEPRLYAGAGSRADHPSLVLMLSVVMLVTCLEA) form the signal peptide. Topologically, residues 44 to 481 (AKLTVGFHAP…VAGMTVTVTA (438 aa)) are extracellular. 9 N-linked (GlcNAc...) asparagine glycosylation sites follow: Asn-55, Asn-85, Asn-94, Asn-217, Asn-225, Asn-238, Asn-418, Asn-440, and Asn-443. Residues 482–502 (VIPTVTFLVLASAAAITGLML) traverse the membrane as a helical segment. Residues 503 to 1100 (WRLRGKVQSH…EEEAKVSEIL (598 aa)) are Cytoplasmic-facing. The 292-residue stretch at 546 to 837 (SDTSTVKASA…EASPRGHVSI (292 aa)) folds into the Protein kinase domain. The Guanylate cyclase domain maps to 901–1031 (TIFFSDIVGF…DTVNMASRME (131 aa)).

This sequence belongs to the adenylyl cyclase class-4/guanylyl cyclase family. Homooligomer. In vitro interacts with NPR1/GC-A. Post-translationally, N-glycosylated. In terms of tissue distribution, highly expressed in testis.

The protein resides in the cell membrane. It carries out the reaction GTP = 3',5'-cyclic GMP + diphosphate. This is Guanylate cyclase 2G (Gucy2g) from Mus musculus (Mouse).